Reading from the N-terminus, the 237-residue chain is Small ribosomal subunit protein uS2c (237 aa).

Belongs to the universal ribosomal protein uS2 family.

Its subcellular location is the plastid. The chain is Small ribosomal subunit protein uS2c (rps2) from Epifagus virginiana (Beechdrops).